A 237-amino-acid chain; its full sequence is Ribosomal RNA large subunit methyltransferase E (237 aa).

S-adenosyl-L-methionine contacts are provided by Gly-80, Trp-82, Asp-108, Asp-124, and Asp-148. Lys-188 acts as the Proton acceptor in catalysis.

Belongs to the class I-like SAM-binding methyltransferase superfamily. RNA methyltransferase RlmE family.

The protein localises to the cytoplasm. It catalyses the reaction uridine(2552) in 23S rRNA + S-adenosyl-L-methionine = 2'-O-methyluridine(2552) in 23S rRNA + S-adenosyl-L-homocysteine + H(+). In terms of biological role, specifically methylates the uridine in position 2552 of 23S rRNA at the 2'-O position of the ribose in the fully assembled 50S ribosomal subunit. In Jannaschia sp. (strain CCS1), this protein is Ribosomal RNA large subunit methyltransferase E.